A 588-amino-acid polypeptide reads, in one-letter code: Cryptochrome-1 (588 aa).

Residues 3-132 (VNAVHWFRKG…EVIVRISHTL (130 aa)) enclose the Photolyase/cryptochrome alpha/beta domain. Lys11 is covalently cross-linked (Glycyl lysine isopeptide (Lys-Gly) (interchain with G-Cter in ubiquitin)). Positions 50 to 54 (NRWRF) match the LIR 1 motif. Ser71 is modified (phosphoserine; by AMPK). Positions 82-87 (DVFPRL) match the LIR 2 motif. Lys107 participates in a covalent cross-link: Glycyl lysine isopeptide (Lys-Gly) (interchain with G-Cter in ubiquitin). An LIR 3 motif is present at residues 151 to 156 (KRFQTL). Residue Lys159 forms a Glycyl lysine isopeptide (Lys-Gly) (interchain with G-Cter in ubiquitin) linkage. Phosphoserine; by MAPK is present on Ser247. Residue Ser252 coordinates FAD. Short sequence motifs (LIR) lie at residues 255–260 (LRFGCL) and 271–276 (DLYKKV). Phosphoserine; by AMPK is present on Ser280. The short motif at 285–290 (SLYGQL) is the LIR 6 element. An FAD-binding site is contributed by Gln289. A Glycyl lysine isopeptide (Lys-Gly) (interchain with G-Cter in ubiquitin) cross-link involves residue Lys329. The LIR 7 signature appears at 335 to 339 (TGFPW). An FAD-binding site is contributed by His355. A required for inhibition of CLOCK-BMAL1-mediated transcription region spans residues 371–470 (WISWEEGMKV…LIGVNYPKPM (100 aa)). Positions 379 to 384 (KVFEEL) match the LIR 8 motif. 387–389 (DAD) provides a ligand contact to FAD. 3 consecutive short sequence motifs (LIR) follow at residues 395 to 400 (GSWMWL), 411 to 416 (HCYCPV), and 430 to 435 (RRYLPV). Positions 471 to 493 (VNHAEASRLNIERMKQIYQQLSR) are interaction with TIMELESS. Residue Lys485 forms a Glycyl lysine isopeptide (Lys-Gly) (interchain with G-Cter in ubiquitin) linkage. Short sequence motifs (LIR) lie at residues 486 to 491 (QIYQQL) and 492 to 497 (SRYRGL). The tract at residues 511 to 588 (GGLMGYAPGE…GPKVQRQSSN (78 aa)) is disordered. Over residues 545 to 568 (DSQQTNPLKQGRSSMGTGLSSGKR) the composition is skewed to polar residues. A Glycyl lysine isopeptide (Lys-Gly) (interchain with G-Cter in ubiquitin) cross-link involves residue Lys567. Ser570 carries the post-translational modification Phosphoserine.

This sequence belongs to the DNA photolyase class-1 family. Component of the circadian core oscillator, which includes the CRY proteins, CLOCK or NPAS2, BMAL1 or BMAL2, CSNK1D and/or CSNK1E, TIMELESS, and the PER proteins. Interacts directly with TIMELESS. Interacts directly with PER1, PER2 and PER3; interaction with PER2 inhibits its ubiquitination and vice versa. Interacts with FBXL21. Interacts with FBXL3. Interacts with CLOCK-BMAL1 independently of PER2 and DNA. Interacts with HDAC1, HDAC2 and SIN3B. Interacts with nuclear receptors AR, NR1D1, NR3C1/GR, RORA and RORC; the interaction with at least NR3C1/GR is ligand dependent. Interacts with PRKDC. Interacts with the G protein subunit alpha GNAS; the interaction may block GPCR-mediated regulation of cAMP concentrations. Interacts with PRMT5. Interacts with EZH2. Interacts with MYBBP1A, DOCK7, HNRNPU, RPL7A, RPL8 and RPS3. Interacts with PPP5C (via TPR repeats). Interacts with MAP1LC3B. Interacts with CLOCK. Interacts with BMAL1. Interacts weakly with HDAC3; this interaction is enhanced in the presence of FBXL3. Interacts with TRIM28, KCTD5 and DDB1. Interacts with FOXO1. Interacts with DTL and DDB1-CUL4A complex. Interacts with HNF4A. Interacts with PSMD2 in a KDM8-dependent manner. Interacts with KDM8 in a FBXL3-dependent manner. Interacts with PPARG in a ligand-dependent manner. Interacts with PPARD (via domain NR LBD) and NR1I2 (via domain NR LBD) in a ligand-dependent manner. Interacts with PPARA, NR1I3 and VDR. FAD serves as cofactor. (6R)-5,10-methylene-5,6,7,8-tetrahydrofolate is required as a cofactor. Phosphorylation on Ser-247 by MAPK is important for the inhibition of CLOCK-BMAL1-mediated transcriptional activity. Phosphorylation by CSNK1E requires interaction with PER1 or PER2. Phosphorylation at Ser-71 and Ser-280 by AMPK decreases protein stability. Phosphorylation at Ser-570 exhibits a robust circadian rhythm with a peak at CT8, increases protein stability, prevents SCF(FBXL3)-mediated degradation and is antagonized by interaction with PRKDC. Post-translationally, ubiquitinated by the SCF(FBXL3) and SCF(FBXL21) complexes, regulating the balance between degradation and stabilization. The SCF(FBXL3) complex is mainly nuclear and mediates ubiquitination and subsequent degradation of CRY1. In contrast, cytoplasmic SCF(FBXL21) complex-mediated ubiquitination leads to stabilize CRY1 and counteract the activity of the SCF(FBXL3) complex. The SCF(FBXL3) and SCF(FBXL21) complexes probably mediate ubiquitination at different Lys residues. Ubiquitination at Lys-11 and Lys-107 are specifically ubiquitinated by the SCF(FBXL21) complex but not by the SCF(FBXL3) complex. Ubiquitination may be inhibited by PER2. Deubiquitinated by USP7. In terms of processing, undergoes autophagy-mediated degradation in the liver in a time-dependent manner. Autophagic degradation of CRY1 (an inhibitor of gluconeogenesis) occurs during periods of reduced feeding allowing induction of gluconeogenesis and maintenance of blood glucose levels.

The protein localises to the cytoplasm. It localises to the nucleus. Functionally, transcriptional repressor which forms a core component of the circadian clock. The circadian clock, an internal time-keeping system, regulates various physiological processes through the generation of approximately 24 hour circadian rhythms in gene expression, which are translated into rhythms in metabolism and behavior. It is derived from the Latin roots 'circa' (about) and 'diem' (day) and acts as an important regulator of a wide array of physiological functions including metabolism, sleep, body temperature, blood pressure, endocrine, immune, cardiovascular, and renal function. Consists of two major components: the central clock, residing in the suprachiasmatic nucleus (SCN) of the brain, and the peripheral clocks that are present in nearly every tissue and organ system. Both the central and peripheral clocks can be reset by environmental cues, also known as Zeitgebers (German for 'timegivers'). The predominant Zeitgeber for the central clock is light, which is sensed by retina and signals directly to the SCN. The central clock entrains the peripheral clocks through neuronal and hormonal signals, body temperature and feeding-related cues, aligning all clocks with the external light/dark cycle. Circadian rhythms allow an organism to achieve temporal homeostasis with its environment at the molecular level by regulating gene expression to create a peak of protein expression once every 24 hours to control when a particular physiological process is most active with respect to the solar day. Transcription and translation of core clock components (CLOCK, NPAS2, BMAL1, BMAL2, PER1, PER2, PER3, CRY1 and CRY2) plays a critical role in rhythm generation, whereas delays imposed by post-translational modifications (PTMs) are important for determining the period (tau) of the rhythms (tau refers to the period of a rhythm and is the length, in time, of one complete cycle). A diurnal rhythm is synchronized with the day/night cycle, while the ultradian and infradian rhythms have a period shorter and longer than 24 hours, respectively. Disruptions in the circadian rhythms contribute to the pathology of cardiovascular diseases, cancer, metabolic syndromes and aging. A transcription/translation feedback loop (TTFL) forms the core of the molecular circadian clock mechanism. Transcription factors, CLOCK or NPAS2 and BMAL1 or BMAL2, form the positive limb of the feedback loop, act in the form of a heterodimer and activate the transcription of core clock genes and clock-controlled genes (involved in key metabolic processes), harboring E-box elements (5'-CACGTG-3') within their promoters. The core clock genes: PER1/2/3 and CRY1/2 which are transcriptional repressors form the negative limb of the feedback loop and interact with the CLOCK|NPAS2-BMAL1|BMAL2 heterodimer inhibiting its activity and thereby negatively regulating their own expression. This heterodimer also activates nuclear receptors NR1D1/2 and RORA/B/G, which form a second feedback loop and which activate and repress BMAL1 transcription, respectively. CRY1 and CRY2 have redundant functions but also differential and selective contributions at least in defining the pace of the SCN circadian clock and its circadian transcriptional outputs. More potent transcriptional repressor in cerebellum and liver than CRY2, though more effective in lengthening the period of the SCN oscillator. On its side, CRY2 seems to play a critical role in tuning SCN circadian period by opposing the action of CRY1. With CRY2, is dispensable for circadian rhythm generation but necessary for the development of intercellular networks for rhythm synchrony. Capable of translocating circadian clock core proteins such as PER proteins to the nucleus. Interacts with CLOCK-BMAL1 independently of PER proteins and is found at CLOCK-BMAL1-bound sites, suggesting that CRY may act as a molecular gatekeeper to maintain CLOCK-BMAL1 in a poised and repressed state until the proper time for transcriptional activation. Represses the CLOCK-BMAL1 induced transcription of BHLHE40/DEC1, ATF4, MTA1, KLF10 and NAMPT. May repress circadian target genes expression in collaboration with HDAC1 and HDAC2 through histone deacetylation. Mediates the clock-control activation of ATR and modulates ATR-mediated DNA damage checkpoint. In liver, mediates circadian regulation of cAMP signaling and gluconeogenesis by binding to membrane-coupled G proteins and blocking glucagon-mediated increases in intracellular cAMP concentrations and CREB1 phosphorylation. Inhibits hepatic gluconeogenesis by decreasing nuclear FOXO1 levels that down-regulates gluconeogenic gene expression. Besides its role in the maintenance of the circadian clock, is also involved in the regulation of other processes. Represses glucocorticoid receptor NR3C1/GR-induced transcriptional activity by binding to glucocorticoid response elements (GREs). Plays a key role in glucose and lipid metabolism modulation, in part, through the transcriptional regulation of genes involved in these pathways, such as LEP or ACSL4. Represses PPARD and its target genes in the skeletal muscle and limits exercise capacity. Plays an essential role in the generation of circadian rhythms in the retina. Represses the transcriptional activity of NR1I2. The protein is Cryptochrome-1 (Cry1) of Rattus norvegicus (Rat).